Here is a 362-residue protein sequence, read N- to C-terminus: UDP-N-acetylglucosamine--N-acetylmuramyl-(pentapeptide) pyrophosphoryl-undecaprenol N-acetylglucosamine transferase (362 aa).

UDP-N-acetyl-alpha-D-glucosamine is bound by residues 11–13 (TGG), asparagine 124, arginine 163, serine 191, isoleucine 246, and glutamine 291.

This sequence belongs to the glycosyltransferase 28 family. MurG subfamily.

The protein localises to the cell inner membrane. It carries out the reaction di-trans,octa-cis-undecaprenyl diphospho-N-acetyl-alpha-D-muramoyl-L-alanyl-D-glutamyl-meso-2,6-diaminopimeloyl-D-alanyl-D-alanine + UDP-N-acetyl-alpha-D-glucosamine = di-trans,octa-cis-undecaprenyl diphospho-[N-acetyl-alpha-D-glucosaminyl-(1-&gt;4)]-N-acetyl-alpha-D-muramoyl-L-alanyl-D-glutamyl-meso-2,6-diaminopimeloyl-D-alanyl-D-alanine + UDP + H(+). It functions in the pathway cell wall biogenesis; peptidoglycan biosynthesis. Its function is as follows. Cell wall formation. Catalyzes the transfer of a GlcNAc subunit on undecaprenyl-pyrophosphoryl-MurNAc-pentapeptide (lipid intermediate I) to form undecaprenyl-pyrophosphoryl-MurNAc-(pentapeptide)GlcNAc (lipid intermediate II). This is UDP-N-acetylglucosamine--N-acetylmuramyl-(pentapeptide) pyrophosphoryl-undecaprenol N-acetylglucosamine transferase from Idiomarina loihiensis (strain ATCC BAA-735 / DSM 15497 / L2-TR).